A 261-amino-acid polypeptide reads, in one-letter code: HTH-type transcriptional repressor CsqR (261 aa).

Residues 8-63 (GNPRHDQLLMLIAERGYMNIDELANLLDVSTQTVRRDIRKLSEQGLITRHHGGAGR) form the HTH deoR-type domain. The segment at residues 25–44 (MNIDELANLLDVSTQTVRRD) is a DNA-binding region (H-T-H motif).

As to quaternary structure, monomer in the absence of DNA. Exhibits a high level of cooperativity once it is bound to its target DNA.

Its activity is regulated as follows. Inactivated in the presence of the effectors sulfoquinovose and sulfoquinovosyl glycerol, leading to the de-repression of the target genes. Functionally, involved in the regulation of the sulfoquinovose operon. Represses the expression of the yihUTS operon and of the yihV and csqR genes. Binds DNA inside the spacer between the bidirectional transcription units comprising the yihUTS operon and the yihV gene, and upstream the csqR gene itself. The protein is HTH-type transcriptional repressor CsqR of Escherichia coli (strain K12).